The following is a 205-amino-acid chain: Recombination protein RecR (205 aa).

The segment at 58–73 adopts a C4-type zinc-finger fold; it reads CKKCHTISDHELCAIC. The region spanning 81–177 is the Toprim domain; the sequence is RVVCIVEDIR…KISTIARGIP (97 aa).

This sequence belongs to the RecR family.

Functionally, may play a role in DNA repair. It seems to be involved in an RecBC-independent recombinational process of DNA repair. It may act with RecF and RecO. The chain is Recombination protein RecR from Cytophaga hutchinsonii (strain ATCC 33406 / DSM 1761 / CIP 103989 / NBRC 15051 / NCIMB 9469 / D465).